A 282-amino-acid chain; its full sequence is tRNA uridine(34) hydroxylase (282 aa).

Residues D128–Y222 form the Rhodanese domain. Catalysis depends on C182, which acts as the Cysteine persulfide intermediate.

It belongs to the TrhO family.

It catalyses the reaction uridine(34) in tRNA + AH2 + O2 = 5-hydroxyuridine(34) in tRNA + A + H2O. Functionally, catalyzes oxygen-dependent 5-hydroxyuridine (ho5U) modification at position 34 in tRNAs. This chain is tRNA uridine(34) hydroxylase, found in Ralstonia nicotianae (strain ATCC BAA-1114 / GMI1000) (Ralstonia solanacearum).